Consider the following 185-residue polypeptide: Elongation factor P (185 aa).

The protein belongs to the elongation factor P family.

It is found in the cytoplasm. The protein operates within protein biosynthesis; polypeptide chain elongation. Its function is as follows. Involved in peptide bond synthesis. Stimulates efficient translation and peptide-bond synthesis on native or reconstituted 70S ribosomes in vitro. Probably functions indirectly by altering the affinity of the ribosome for aminoacyl-tRNA, thus increasing their reactivity as acceptors for peptidyl transferase. The polypeptide is Elongation factor P (Clostridium kluyveri (strain ATCC 8527 / DSM 555 / NBRC 12016 / NCIMB 10680 / K1)).